The primary structure comprises 296 residues: Nucleotide-binding protein spyM18_0713 (296 aa).

ATP is bound at residue 13–20 (GMSGAGKT). Position 63 to 66 (63 to 66 (DMRS)) interacts with GTP.

This sequence belongs to the RapZ-like family.

In terms of biological role, displays ATPase and GTPase activities. This Streptococcus pyogenes serotype M18 (strain MGAS8232) protein is Nucleotide-binding protein spyM18_0713.